An 87-amino-acid chain; its full sequence is Insulin-related peptide 1 (87 aa).

The N-terminal stretch at 1 to 19 (MKSFMVFVLIFACFSCYYA) is a signal peptide. Residues 20-44 (QESTNFYCGRTLSRALAVLCYGAES) constitute a propeptide that is removed on maturation. Arg64 is modified (arginine amide). Residues 68–87 (GPVDECCEKACSIQELMTYC) constitute a propeptide that is removed on maturation.

The protein belongs to the insulin family. As to expression, DAGWWIPQHGHHALAGVR-amide: Expressed in corpora cardiaca (CC), corpora allata (CA), antennal lobe (AL) and gnathal ganglion (GNG) (at protein level). Expression in CC and CA detected in most animals, in AL and GNG in few animals (at protein level).

Its subcellular location is the secreted. In Agrotis ipsilon (Black cutworm moth), this protein is Insulin-related peptide 1.